Consider the following 84-residue polypeptide: Exodeoxyribonuclease 7 small subunit (84 aa).

Belongs to the XseB family. In terms of assembly, heterooligomer composed of large and small subunits.

It is found in the cytoplasm. It catalyses the reaction Exonucleolytic cleavage in either 5'- to 3'- or 3'- to 5'-direction to yield nucleoside 5'-phosphates.. Bidirectionally degrades single-stranded DNA into large acid-insoluble oligonucleotides, which are then degraded further into small acid-soluble oligonucleotides. The polypeptide is Exodeoxyribonuclease 7 small subunit (Yersinia pseudotuberculosis serotype O:1b (strain IP 31758)).